The chain runs to 534 residues: tRNA uridine(34) acetyltransferase (534 aa).

Positions 70 to 330 (KPVRTISGVA…GEFKPYREEE (261 aa)) are radical S-adenosyl-L-methionine (rSAM). The region spanning 73-344 (RTISGVAVVA…ISYAKSIMPK (272 aa)) is the Radical SAM core domain. [4Fe-4S] cluster is bound by residues C90, C95, and C98. K150 is an acetyl-CoA binding site. The cysteines at positions 384 and 389 are disulfide-linked. The N-acetyltransferase domain maps to 387–534 (IRCREVGHVY…RVGAYMGKEL (148 aa)). Acetyl-CoA contacts are provided by residues 461-464 (QLHV), 485-487 (YGR), and Y518.

This sequence belongs to the ELP3 family. It depends on [4Fe-4S] cluster as a cofactor.

The enzyme catalyses uridine(34) in tRNA + acetyl-CoA + S-adenosyl-L-methionine + H2O = 5-(carboxymethyl)uridine(34) in tRNA + 5'-deoxyadenosine + L-methionine + CoA + 2 H(+). It functions in the pathway tRNA modification. Its function is as follows. tRNA uridine(34) acetyltransferase, which mediates formation of carboxymethyluridine in the wobble base at position 34 in tRNAs. The proposed mechanism is the following: (i) recruits S-adenosyl-L-methionine and cleaves it to generate a 5'-deoxyadenosine radical (5'-dA) in the radical S-adenosyl-L-methionine (rSAM) region, (ii) hydrolyzes acetyl-CoA in the N-acetyltransferase domain and (iii) an acetyl radical is formed by the products of the two domains and (iv) is transferred onto the C5 position of uridine(34) in the bound tRNA molecule. Does not show protein lysine acetyltransferase activity. This chain is tRNA uridine(34) acetyltransferase, found in Methanocaldococcus infernus (strain DSM 11812 / JCM 15783 / ME).